A 1837-amino-acid polypeptide reads, in one-letter code: Nucleoporin nup211 (1837 aa).

Coiled-coil stretches lie at residues glutamate 59–isoleucine 378, tyrosine 415–leucine 519, and valine 559–tyrosine 625. The residue at position 650 (threonine 650) is a Phosphothreonine. Coiled-coil stretches lie at residues glutamate 661–leucine 1163, leucine 1222–histidine 1637, and lysine 1675–threonine 1712. A disordered region spans residues lysine 1464–threonine 1521. The span at histidine 1468–glutamate 1479 shows a compositional bias: polar residues. Residues glutamine 1480 to threonine 1521 show a composition bias toward basic and acidic residues. Phosphoserine is present on serine 1558. At threonine 1560 the chain carries Phosphothreonine. Residue serine 1563 is modified to Phosphoserine. 2 disordered regions span residues glutamate 1602 to aspartate 1642 and glutamate 1700 to lysine 1837. Basic and acidic residues predominate over residues lysine 1617–alanine 1628. Composition is skewed to polar residues over residues glutamate 1700–threonine 1730, lysine 1753–glycine 1763, isoleucine 1795–serine 1814, and glycine 1827–lysine 1837.

The protein localises to the cytoplasm. Its subcellular location is the nucleus. Functions as a component of the nuclear pore complex (NPC). NPC components, collectively referred to as nucleoporins (NUPs), can play the role of both NPC structural components and of docking or interaction partners for transiently associated nuclear transport factors. Active directional transport is assured by both, a Phe-Gly (FG) repeat affinity gradient for these transport factors across the NPC and a transport cofactor concentration gradient across the nuclear envelope. The protein is Nucleoporin nup211 (nup211) of Schizosaccharomyces pombe (strain 972 / ATCC 24843) (Fission yeast).